The chain runs to 618 residues: DNA mismatch repair protein MutL (618 aa).

Residues 366 to 381 are compositionally biased toward low complexity; the sequence is AEPTAAREPATPRYSG. Residues 366–405 are disordered; sequence AEPTAAREPATPRYSGGTSGGNGGRQSAGGWPHAQPGYQK. Residues 382-392 are compositionally biased toward gly residues; the sequence is GTSGGNGGRQS.

The protein belongs to the DNA mismatch repair MutL/HexB family.

Its function is as follows. This protein is involved in the repair of mismatches in DNA. It is required for dam-dependent methyl-directed DNA mismatch repair. May act as a 'molecular matchmaker', a protein that promotes the formation of a stable complex between two or more DNA-binding proteins in an ATP-dependent manner without itself being part of a final effector complex. The chain is DNA mismatch repair protein MutL from Salmonella agona (strain SL483).